We begin with the raw amino-acid sequence, 1183 residues long: PAN2-PAN3 deadenylation complex catalytic subunit PAN2 (1183 aa).

WD repeat units lie at residues 150–189 (SIENSSPVVKLAPLHRTVLAAGLSGQVTVLDPRTGFKAAQ) and 289–328 (DVSSYITSMALSSRGDYLAFGDGDGQLHVWTTNETGENAA). Residues 331–478 (ENGSIVLPPF…EEIEEELNDG (148 aa)) form a linker region. The disordered stretch occupies residues 439–470 (AEGRARGKGRRDSGPRFRSEKDKKGTYKDKEE). Positions 448-469 (RRDSGPRFRSEKDKKGTYKDKE) are enriched in basic and acidic residues. The 386-residue stretch at 479–864 (EVPKYYRKVE…VPAVIILERE (386 aa)) folds into the USP domain. The region spanning 916–1085 (VAIDAEFVAL…HDSIEDAHFA (170 aa)) is the Exonuclease domain. A divalent metal cation is bound by residues Asp-919, Glu-921, Asp-1028, and Asp-1081. The disordered stretch occupies residues 1155-1183 (KSRMATPPPPTKLGLPQWASQNSPSPLRR). Polar residues predominate over residues 1172–1183 (WASQNSPSPLRR).

The protein belongs to the peptidase C19 family. PAN2 subfamily. As to quaternary structure, forms a heterotrimer with an asymmetric homodimer of the regulatory subunit PAN3 to form the poly(A)-nuclease (PAN) deadenylation complex. A divalent metal cation is required as a cofactor.

The protein localises to the cytoplasm. The catalysed reaction is Exonucleolytic cleavage of poly(A) to 5'-AMP.. With respect to regulation, positively regulated by the regulatory subunit PAN3. Catalytic subunit of the poly(A)-nuclease (PAN) deadenylation complex, one of two cytoplasmic mRNA deadenylases involved in mRNA turnover. PAN specifically shortens poly(A) tails of RNA and the activity is stimulated by poly(A)-binding protein PAB1. PAN deadenylation is followed by rapid degradation of the shortened mRNA tails by the CCR4-NOT complex. Deadenylated mRNAs are then degraded by two alternative mechanisms, namely exosome-mediated 3'-5' exonucleolytic degradation, or deadenylation-dependent mRNA decaping and subsequent 5'-3' exonucleolytic degradation by XRN1. May also be involved in post-transcriptional maturation of mRNA poly(A) tails. The polypeptide is PAN2-PAN3 deadenylation complex catalytic subunit PAN2 (Cryptococcus neoformans var. neoformans serotype D (strain B-3501A) (Filobasidiella neoformans)).